Here is a 276-residue protein sequence, read N- to C-terminus: Ribosomal RNA small subunit methyltransferase A (276 aa).

Residues Asn27, Leu29, Gly54, Glu75, Asp101, and Asn123 each coordinate S-adenosyl-L-methionine.

The protein belongs to the class I-like SAM-binding methyltransferase superfamily. rRNA adenine N(6)-methyltransferase family. RsmA subfamily.

The protein localises to the cytoplasm. It carries out the reaction adenosine(1518)/adenosine(1519) in 16S rRNA + 4 S-adenosyl-L-methionine = N(6)-dimethyladenosine(1518)/N(6)-dimethyladenosine(1519) in 16S rRNA + 4 S-adenosyl-L-homocysteine + 4 H(+). Functionally, specifically dimethylates two adjacent adenosines (A1518 and A1519) in the loop of a conserved hairpin near the 3'-end of 16S rRNA in the 30S particle. May play a critical role in biogenesis of 30S subunits. This Bartonella henselae (strain ATCC 49882 / DSM 28221 / CCUG 30454 / Houston 1) (Rochalimaea henselae) protein is Ribosomal RNA small subunit methyltransferase A.